We begin with the raw amino-acid sequence, 566 residues long: Amidophosphoribosyltransferase 1, chloroplastic (566 aa).

A compositionally biased stretch (low complexity) spans Met-1–Leu-13. Disordered regions lie at residues Met-1–Pro-28 and Val-58–Pro-87. The N-terminal 58 residues, Met-1 to Val-58, are a transit peptide targeting the chloroplast. Residues Thr-15–Gln-25 are compositionally biased toward polar residues. Residues Ser-59–Ser-68 show a composition bias toward low complexity. Over residues Asp-70–Pro-87 the composition is skewed to basic and acidic residues. Cys-91 acts as the Nucleophile in catalysis. The region spanning Cys-91–Asp-311 is the Glutamine amidotransferase type-2 domain. 4 residues coordinate [4Fe-4S] cluster: Cys-327, Cys-473, Cys-524, and Cys-527.

It in the C-terminal section; belongs to the purine/pyrimidine phosphoribosyltransferase family. [4Fe-4S] cluster is required as a cofactor. Mg(2+) serves as cofactor. Expressed in flowers and roots. Also present in leaves, and, to a lower extent, in cotyledons.

Its subcellular location is the plastid. The protein resides in the chloroplast stroma. It catalyses the reaction 5-phospho-beta-D-ribosylamine + L-glutamate + diphosphate = 5-phospho-alpha-D-ribose 1-diphosphate + L-glutamine + H2O. The protein operates within purine metabolism; IMP biosynthesis via de novo pathway; N(1)-(5-phospho-D-ribosyl)glycinamide from 5-phospho-alpha-D-ribose 1-diphosphate: step 1/2. Catalyzes the first committed step of 'de novo' purine biosynthesis from glutamine. Involved in plastid biogenesis and cell division. The protein is Amidophosphoribosyltransferase 1, chloroplastic (ASE1) of Arabidopsis thaliana (Mouse-ear cress).